Here is a 215-residue protein sequence, read N- to C-terminus: Probable GTP-binding protein EngB (215 aa).

The EngB-type G domain maps to 30 to 204; it reads EGLEVAFAGR…QMVLAQWLGL (175 aa). GTP is bound by residues 38-45, 64-68, 82-85, 149-152, and 182-185; these read GRSNAGKS, GRTQL, DLPG, TKAD, and LFSA. The Mg(2+) site is built by S45 and T66.

Belongs to the TRAFAC class TrmE-Era-EngA-EngB-Septin-like GTPase superfamily. EngB GTPase family. Requires Mg(2+) as cofactor.

Functionally, necessary for normal cell division and for the maintenance of normal septation. The chain is Probable GTP-binding protein EngB from Pseudomonas paraeruginosa (strain DSM 24068 / PA7) (Pseudomonas aeruginosa (strain PA7)).